An 865-amino-acid chain; its full sequence is Leucine--tRNA ligase (865 aa).

Residues 36 to 46 carry the 'HIGH' region motif; sequence PYPSGKIHMGH. The 'KMSKS' region signature appears at 608-612; sequence KMSKS. ATP is bound at residue Lys-611.

This sequence belongs to the class-I aminoacyl-tRNA synthetase family.

The protein localises to the cytoplasm. It catalyses the reaction tRNA(Leu) + L-leucine + ATP = L-leucyl-tRNA(Leu) + AMP + diphosphate. This is Leucine--tRNA ligase from Wolbachia sp. subsp. Brugia malayi (strain TRS).